A 341-amino-acid polypeptide reads, in one-letter code: HMG box-containing protein C10F6.08c (341 aa).

Basic and acidic residues predominate over residues 68 to 77 (SEAKSREFGQ). 2 disordered regions span residues 68 to 195 (SEAK…SNAK) and 236 to 341 (LTEE…SSNA). Composition is skewed to polar residues over residues 116–157 (DTNV…QVVQ) and 165–177 (NTDPIPSPIITNL). Low complexity predominate over residues 178 to 195 (KTESSKSSGAKKATSNAK). A DNA-binding region (HMG box) is located at residues 195–263 (KITDTMLFNH…KAREARRRRS (69 aa)). Composition is skewed to basic and acidic residues over residues 238-256 (EEEKKPYHEGLLAAREKAR) and 269-304 (KLEKEKAKEKQKDKDQEQDTVSDKNQIDEIEKGQKE). Phosphothreonine occurs at positions 314 and 315. Ser-316 is modified (phosphoserine).

It is found in the nucleus. The protein is HMG box-containing protein C10F6.08c of Schizosaccharomyces pombe (strain 972 / ATCC 24843) (Fission yeast).